The following is a 370-amino-acid chain: Putative agmatine deiminase (370 aa).

Cysteine 361 acts as the Amidino-cysteine intermediate in catalysis.

Belongs to the agmatine deiminase family.

The catalysed reaction is agmatine + H2O = N-carbamoylputrescine + NH4(+). This is Putative agmatine deiminase from Shewanella baltica (strain OS195).